We begin with the raw amino-acid sequence, 423 residues long: Serine--tRNA ligase (423 aa).

231–233 provides a ligand contact to L-serine; it reads TGE. Position 262–264 (262–264) interacts with ATP; sequence RSE. An L-serine-binding site is contributed by glutamate 285. 349-352 is an ATP binding site; that stretch reads EISS. Serine 385 contributes to the L-serine binding site.

Belongs to the class-II aminoacyl-tRNA synthetase family. Type-1 seryl-tRNA synthetase subfamily. As to quaternary structure, homodimer. The tRNA molecule binds across the dimer.

Its subcellular location is the cytoplasm. It catalyses the reaction tRNA(Ser) + L-serine + ATP = L-seryl-tRNA(Ser) + AMP + diphosphate + H(+). The enzyme catalyses tRNA(Sec) + L-serine + ATP = L-seryl-tRNA(Sec) + AMP + diphosphate + H(+). Its pathway is aminoacyl-tRNA biosynthesis; selenocysteinyl-tRNA(Sec) biosynthesis; L-seryl-tRNA(Sec) from L-serine and tRNA(Sec): step 1/1. In terms of biological role, catalyzes the attachment of serine to tRNA(Ser). Is also able to aminoacylate tRNA(Sec) with serine, to form the misacylated tRNA L-seryl-tRNA(Sec), which will be further converted into selenocysteinyl-tRNA(Sec). The sequence is that of Serine--tRNA ligase from Coxiella burnetii (strain CbuK_Q154) (Coxiella burnetii (strain Q154)).